We begin with the raw amino-acid sequence, 156 residues long: Small ribosomal subunit protein uS7 (156 aa).

The protein belongs to the universal ribosomal protein uS7 family. In terms of assembly, part of the 30S ribosomal subunit. Contacts proteins S9 and S11.

Functionally, one of the primary rRNA binding proteins, it binds directly to 16S rRNA where it nucleates assembly of the head domain of the 30S subunit. Is located at the subunit interface close to the decoding center, probably blocks exit of the E-site tRNA. This Novosphingobium aromaticivorans (strain ATCC 700278 / DSM 12444 / CCUG 56034 / CIP 105152 / NBRC 16084 / F199) protein is Small ribosomal subunit protein uS7.